The following is an 85-amino-acid chain: Antitoxin VapB31 (85 aa).

In terms of biological role, antitoxin component of a type II toxin-antitoxin (TA) system. Upon expression in M.smegmatis neutralizes the effect of cognate toxin VapC31. This chain is Antitoxin VapB31 (vapB31), found in Mycobacterium tuberculosis (strain ATCC 25618 / H37Rv).